The sequence spans 631 residues: Glutamyl-tRNA(Gln) amidotransferase subunit E (631 aa).

The protein belongs to the GatB/GatE family. GatE subfamily. In terms of assembly, heterodimer of GatD and GatE.

It carries out the reaction L-glutamyl-tRNA(Gln) + L-glutamine + ATP + H2O = L-glutaminyl-tRNA(Gln) + L-glutamate + ADP + phosphate + H(+). In terms of biological role, allows the formation of correctly charged Gln-tRNA(Gln) through the transamidation of misacylated Glu-tRNA(Gln) in organisms which lack glutaminyl-tRNA synthetase. The reaction takes place in the presence of glutamine and ATP through an activated gamma-phospho-Glu-tRNA(Gln). The GatDE system is specific for glutamate and does not act on aspartate. The protein is Glutamyl-tRNA(Gln) amidotransferase subunit E of Methanococcus maripaludis (strain C5 / ATCC BAA-1333).